Here is a 269-residue protein sequence, read N- to C-terminus: MLEVIHTGLNIGSKTLLHDISFIIKPGEMVAICGPNGAGKSSLIRLLCGELKPSSGEVRWEGKSLAEWNLLQLARQRALMQQHAEVGFAYTALEIILLGRHPHHLGANRPQDYQIAMAAMQEVGAVHLAEQIYSTLSGGEQARVQMARVLAQIWESSQGARLLLLDEPTAALDPLQQHRMLTIARKWADKGDVAVVAIVHDLNLAAQYADRIALLRDGRLQAIDRVESIMTPAMVEACFDLPCVLLNHPDGGTPMIAARRHPSSSMIAT.

The 241-residue stretch at 2–242 folds into the ABC transporter domain; sequence LEVIHTGLNI…AMVEACFDLP (241 aa). ATP is bound at residue 34–41; it reads GPNGAGKS.

The protein belongs to the ABC transporter superfamily. Heme (hemin) importer (TC 3.A.1.14.5) family. The complex is composed of two ATP-binding proteins (HmuV), two transmembrane proteins (HmuU) and a solute-binding protein (HmuT).

The protein localises to the cell inner membrane. Its function is as follows. Part of the ABC transporter complex HmuTUV involved in hemin import. Responsible for energy coupling to the transport system. This is Hemin import ATP-binding protein HmuV from Methylobacillus flagellatus (strain ATCC 51484 / DSM 6875 / VKM B-1610 / KT).